The sequence spans 506 residues: WD repeat-containing protein 55 homolog (506 aa).

Over residues 1–11 (MHRHDCFKTPA) the composition is skewed to basic and acidic residues. 3 disordered regions span residues 1 to 20 (MHRH…DDID), 33 to 87 (QEVL…SDDS), and 100 to 132 (AKRR…DEDD). Over residues 33–48 (QEVLNESESDDDEYDL) the composition is skewed to acidic residues. A compositionally biased stretch (low complexity) spans 61-74 (GNISSNESISSDGS). Residues 78-87 (NAEDTDSDDS) show a composition bias toward acidic residues. 6 WD repeats span residues 156-195 (RLED…NKLL), 200-239 (VHAK…LKKL), 243-281 (AHDD…AIFE), 284-323 (EVED…LYVQ), 326-365 (PYEE…YHCD), and 410-449 (QHNM…DFGD). A disordered region spans residues 480–506 (DMTKEQDDDDNDDGGNNTTAAGSNNVT). The span at 493–506 (GGNNTTAAGSNNVT) shows a compositional bias: low complexity.

It belongs to the WD repeat WDR55 family.

This is WD repeat-containing protein 55 homolog from Drosophila mojavensis (Fruit fly).